A 320-amino-acid polypeptide reads, in one-letter code: Polyketide transferase FFUJ_12241 (320 aa).

The segment at 58–298 (RDITCLAWDP…ILKGKGHLDW (241 aa)) is abhydrolase domain.

Belongs to the polyketide transferase af380 family.

Functionally, polyketide transferase; part of the gene cluster that mediates the biosynthesis of fujikurins A-D, secondary metabolites playing a role during rice infection. The polyketide synthase PKS19 acts with the trans-enoyl reductase FFUJ_12240 and the polyketide transferase FFUJ_12241 to produce fujikurins, however, the biosynthesis pathway has not been identified yet. This chain is Polyketide transferase FFUJ_12241, found in Gibberella fujikuroi (strain CBS 195.34 / IMI 58289 / NRRL A-6831) (Bakanae and foot rot disease fungus).